Reading from the N-terminus, the 354-residue chain is Protein-arginine kinase (354 aa).

The Phosphagen kinase C-terminal domain occupies 24–254 (IVLSSRIRLA…QQIIQQEKMA (231 aa)). ATP-binding positions include 27 to 31 (SSRIR), H92, R125, 176 to 180 (RASVM), and 207 to 212 (RGIYGE). The RDXXRA motif of the pArg binding pocket involved in allosteric regulation motif lies at 337–342 (RDYRRA).

Belongs to the ATP:guanido phosphotransferase family.

The enzyme catalyses L-arginyl-[protein] + ATP = N(omega)-phospho-L-arginyl-[protein] + ADP + H(+). Its activity is regulated as follows. Appears to be allosterically activated by the binding of pArg-containing polypeptides to the pArg-binding pocket localized in the C-terminal domain of McsB. Its function is as follows. Catalyzes the specific phosphorylation of arginine residues in a large number of proteins. Is part of the bacterial stress response system. Protein arginine phosphorylation has a physiologically important role and is involved in the regulation of many critical cellular processes, such as protein homeostasis, motility, competence, and stringent and stress responses, by regulating gene expression and protein activity. This chain is Protein-arginine kinase, found in Bacillus cereus (strain G9842).